The following is a 444-amino-acid chain: C4-dicarboxylate transport protein (444 aa).

8 helical membrane-spanning segments follow: residues 7–29, 44–66, 79–101, 143–165, 186–208, 221–243, 291–313, and 353–375; these read LYKSLYFQVIVAIAIGILLGHFY, IKLIKMVIAPIIFCTVVSGIAGM, ALLYFEIVSTIALLIGLVVVNVV, IVGAFANGDILQVLMFSVIFGFA, VMFNIINMIMKLAPIGALGAMAF, LGQLMICFYITCVLFVLVVLGAI, VVGLVIPTGYSFNLDGTSIYLTM, and FIVLAATLSAVGHLPVAGLALIL. The segment at 418–444 is disordered; that stretch reads SGGRAISDTREEDDLGVAEGPTPTTVK.

It belongs to the dicarboxylate/amino acid:cation symporter (DAACS) (TC 2.A.23) family.

It localises to the cell inner membrane. In terms of biological role, responsible for the transport of dicarboxylates such as succinate, fumarate, and malate from the periplasm across the inner membrane. The polypeptide is C4-dicarboxylate transport protein (Pseudomonas chlororaphis (Pseudomonas aureofaciens)).